An 880-amino-acid chain; its full sequence is Alanine--tRNA ligase (880 aa).

His566, His570, Cys668, and His672 together coordinate Zn(2+).

The protein belongs to the class-II aminoacyl-tRNA synthetase family. Requires Zn(2+) as cofactor.

It localises to the cytoplasm. The catalysed reaction is tRNA(Ala) + L-alanine + ATP = L-alanyl-tRNA(Ala) + AMP + diphosphate. In terms of biological role, catalyzes the attachment of alanine to tRNA(Ala) in a two-step reaction: alanine is first activated by ATP to form Ala-AMP and then transferred to the acceptor end of tRNA(Ala). Also edits incorrectly charged Ser-tRNA(Ala) and Gly-tRNA(Ala) via its editing domain. The protein is Alanine--tRNA ligase of Parafrankia sp. (strain EAN1pec).